Reading from the N-terminus, the 158-residue chain is MKKVSIQVCISNKQNDVPIRIQSAKKLVLYCLQHWEVHTDQVYIYFLDDESLAQLHDEVFSDPSLTDTITLPIDSPGTSSQPHILGEAFISPKAAIRFLKDRAEDSDLLYEEISRYVIHSLLHMLGYDDQTPEERKKMRVKENQALCMLREKHALLSD.

The Zn(2+) site is built by His-119, His-123, and Asp-129.

Belongs to the endoribonuclease YbeY family. Zn(2+) serves as cofactor.

The protein resides in the cytoplasm. In terms of biological role, single strand-specific metallo-endoribonuclease involved in late-stage 70S ribosome quality control and in maturation of the 3' terminus of the 16S rRNA. The chain is Endoribonuclease YbeY from Chlamydia caviae (strain ATCC VR-813 / DSM 19441 / 03DC25 / GPIC) (Chlamydophila caviae).